The following is a 217-amino-acid chain: 3,4-dihydroxy-2-butanone 4-phosphate synthase (217 aa).

Residues arginine 37 to glutamate 38, aspartate 42, arginine 150 to threonine 154, and glutamate 174 contribute to the D-ribulose 5-phosphate site. Mg(2+) is bound at residue glutamate 38. Mg(2+) is bound at residue histidine 153.

It belongs to the DHBP synthase family. Homodimer. The cofactor is Mg(2+). Mn(2+) is required as a cofactor.

The enzyme catalyses D-ribulose 5-phosphate = (2S)-2-hydroxy-3-oxobutyl phosphate + formate + H(+). It participates in cofactor biosynthesis; riboflavin biosynthesis; 2-hydroxy-3-oxobutyl phosphate from D-ribulose 5-phosphate: step 1/1. Its function is as follows. Catalyzes the conversion of D-ribulose 5-phosphate to formate and 3,4-dihydroxy-2-butanone 4-phosphate. The sequence is that of 3,4-dihydroxy-2-butanone 4-phosphate synthase from Shewanella oneidensis (strain ATCC 700550 / JCM 31522 / CIP 106686 / LMG 19005 / NCIMB 14063 / MR-1).